The primary structure comprises 424 residues: Ankyrin repeat domain-containing protein 61 (424 aa).

7 ANK repeats span residues 80–109 (LSFL…DPEA), 113–169 (QGFT…ARVD), 172–201 (HRHC…QVNA), 205–234 (SSMT…SVNC), 239–278 (TGNT…QVNA), 282–311 (DGQA…NVNI), and 315–348 (NGES…PLRL).

This chain is Ankyrin repeat domain-containing protein 61 (ANKRD61), found in Bos taurus (Bovine).